The primary structure comprises 151 residues: MKQKADNLIAQNKKASHDYFIKETLEAGIALTGTEIKSIRARRINLRDGYVQIINGSAFLENVHISEYKEGNRYNHDPLRSRRLLLHKREIARLAGIQAQQGMAIIPLKVYLKHGFAKVLIGVGQGKKQYDKRQTIKKRDQDREIHRKYGI.

The interval 132–151 (KRQTIKKRDQDREIHRKYGI) is disordered.

Belongs to the SmpB family.

It localises to the cytoplasm. Required for rescue of stalled ribosomes mediated by trans-translation. Binds to transfer-messenger RNA (tmRNA), required for stable association of tmRNA with ribosomes. tmRNA and SmpB together mimic tRNA shape, replacing the anticodon stem-loop with SmpB. tmRNA is encoded by the ssrA gene; the 2 termini fold to resemble tRNA(Ala) and it encodes a 'tag peptide', a short internal open reading frame. During trans-translation Ala-aminoacylated tmRNA acts like a tRNA, entering the A-site of stalled ribosomes, displacing the stalled mRNA. The ribosome then switches to translate the ORF on the tmRNA; the nascent peptide is terminated with the 'tag peptide' encoded by the tmRNA and targeted for degradation. The ribosome is freed to recommence translation, which seems to be the essential function of trans-translation. The protein is SsrA-binding protein of Lactobacillus johnsonii (strain CNCM I-12250 / La1 / NCC 533).